The following is a 356-amino-acid chain: 5-formaminoimidazole-4-carboxamide-1-(beta)-D-ribofuranosyl 5'-monophosphate synthetase 1 (356 aa).

5-amino-1-(5-phospho-beta-D-ribosyl)imidazole-4-carboxamide-binding residues include His-27 and Ser-94. The ATP-grasp domain occupies 101-333 (TENFAEMAVP…YADLIQEDLS (233 aa)). Residues 145–196 (PRDI…TRYY) and Glu-226 contribute to the ATP site. A 5-amino-1-(5-phospho-beta-D-ribosyl)imidazole-4-carboxamide-binding site is contributed by Asn-255. Mg(2+) is bound by residues Glu-293 and Glu-306.

The protein belongs to the phosphohexose mutase family. It depends on Mg(2+) as a cofactor. Mn(2+) is required as a cofactor.

The enzyme catalyses 5-amino-1-(5-phospho-beta-D-ribosyl)imidazole-4-carboxamide + formate + ATP = 5-formamido-1-(5-phospho-D-ribosyl)imidazole-4-carboxamide + ADP + phosphate. It functions in the pathway purine metabolism; IMP biosynthesis via de novo pathway; 5-formamido-1-(5-phospho-D-ribosyl)imidazole-4-carboxamide from 5-amino-1-(5-phospho-D-ribosyl)imidazole-4-carboxamide (formate route): step 1/1. Its function is as follows. Catalyzes the ATP- and formate-dependent formylation of 5-aminoimidazole-4-carboxamide-1-beta-d-ribofuranosyl 5'-monophosphate (AICAR) to 5-formaminoimidazole-4-carboxamide-1-beta-d-ribofuranosyl 5'-monophosphate (FAICAR) in the absence of folates. The chain is 5-formaminoimidazole-4-carboxamide-1-(beta)-D-ribofuranosyl 5'-monophosphate synthetase 1 from Methanosarcina mazei (strain ATCC BAA-159 / DSM 3647 / Goe1 / Go1 / JCM 11833 / OCM 88) (Methanosarcina frisia).